We begin with the raw amino-acid sequence, 265 residues long: 3'(2'),5'-bisphosphate nucleotidase CysQ (265 aa).

Mg(2+)-binding residues include E80, D99, L101, D102, and D222. Residue E80 coordinates substrate. Substrate contacts are provided by residues 101–104 and D222; that span reads LDGT.

The protein belongs to the inositol monophosphatase superfamily. CysQ family. It depends on Mg(2+) as a cofactor.

It localises to the cell inner membrane. The catalysed reaction is adenosine 3',5'-bisphosphate + H2O = AMP + phosphate. Functionally, converts adenosine-3',5'-bisphosphate (PAP) to AMP. The sequence is that of 3'(2'),5'-bisphosphate nucleotidase CysQ from Buchnera aphidicola subsp. Acyrthosiphon pisum (strain APS) (Acyrthosiphon pisum symbiotic bacterium).